Consider the following 572-residue polypeptide: Butyrate--CoA ligase AAE11, peroxisomal (572 aa).

Positions 570–572 (SRL) match the Microbody targeting signal motif.

The protein belongs to the ATP-dependent AMP-binding enzyme family. As to expression, expressed in flowers.

It localises to the peroxisome. The catalysed reaction is a medium-chain fatty acid + ATP + CoA = a medium-chain fatty acyl-CoA + AMP + diphosphate. Butyrate--CoA ligase that is active in vitro with medium-chain fatty acids, with a preference for hexanoate and octanoate. This Arabidopsis thaliana (Mouse-ear cress) protein is Butyrate--CoA ligase AAE11, peroxisomal (AAE11).